The following is a 375-amino-acid chain: Chaperone protein DnaJ (375 aa).

In terms of domain architecture, J spans 4–69; it reads DLYETLGVQK…QKRAAYDRYG (66 aa). A CR-type zinc finger spans residues 133 to 211; it reads GKTAQIRVPT…CHGQGRVVEE (79 aa). Residues Cys-146, Cys-149, Cys-163, Cys-166, Cys-185, Cys-188, Cys-199, and Cys-202 each coordinate Zn(2+). CXXCXGXG motif repeat units lie at residues 146 to 153, 163 to 170, 185 to 192, and 199 to 206; these read CDVCTGTG, CGTCQGTG, CPTCGGRG, and CTKCHGQG.

This sequence belongs to the DnaJ family. Homodimer. Requires Zn(2+) as cofactor.

Its subcellular location is the cytoplasm. In terms of biological role, participates actively in the response to hyperosmotic and heat shock by preventing the aggregation of stress-denatured proteins and by disaggregating proteins, also in an autonomous, DnaK-independent fashion. Unfolded proteins bind initially to DnaJ; upon interaction with the DnaJ-bound protein, DnaK hydrolyzes its bound ATP, resulting in the formation of a stable complex. GrpE releases ADP from DnaK; ATP binding to DnaK triggers the release of the substrate protein, thus completing the reaction cycle. Several rounds of ATP-dependent interactions between DnaJ, DnaK and GrpE are required for fully efficient folding. Also involved, together with DnaK and GrpE, in the DNA replication of plasmids through activation of initiation proteins. This chain is Chaperone protein DnaJ, found in Sinorhizobium medicae (strain WSM419) (Ensifer medicae).